Consider the following 195-residue polypeptide: Pyridoxal 5'-phosphate synthase subunit PdxT (195 aa).

46 to 48 (GES) serves as a coordination point for L-glutamine. The active-site Nucleophile is Cys-78. Residues Arg-107 and 135 to 136 (IR) contribute to the L-glutamine site. Residues His-172 and Glu-174 each act as charge relay system in the active site.

Belongs to the glutaminase PdxT/SNO family. In the presence of PdxS, forms a dodecamer of heterodimers. Only shows activity in the heterodimer.

The catalysed reaction is aldehydo-D-ribose 5-phosphate + D-glyceraldehyde 3-phosphate + L-glutamine = pyridoxal 5'-phosphate + L-glutamate + phosphate + 3 H2O + H(+). It carries out the reaction L-glutamine + H2O = L-glutamate + NH4(+). It participates in cofactor biosynthesis; pyridoxal 5'-phosphate biosynthesis. Functionally, catalyzes the hydrolysis of glutamine to glutamate and ammonia as part of the biosynthesis of pyridoxal 5'-phosphate. The resulting ammonia molecule is channeled to the active site of PdxS. The chain is Pyridoxal 5'-phosphate synthase subunit PdxT from Corynebacterium jeikeium (strain K411).